Here is a 143-residue protein sequence, read N- to C-terminus: MRLLGLDVGSKTVGVAISDPLGITAQELETIKIDESKFSFGMRQIRKLVRKYDVEGFVLGLPKNMDGSSGHSVERSKQYGERLKEKFDLPVHYMDERLTTVQADRILVQEAGVHDRVERKKVIDQMAAVLILQSYLEATRKDK.

The protein belongs to the YqgF nuclease family.

It is found in the cytoplasm. Could be a nuclease involved in processing of the 5'-end of pre-16S rRNA. The protein is Putative pre-16S rRNA nuclease of Lactobacillus gasseri (strain ATCC 33323 / DSM 20243 / BCRC 14619 / CIP 102991 / JCM 1131 / KCTC 3163 / NCIMB 11718 / NCTC 13722 / AM63).